The sequence spans 234 residues: RPSWTVDSDSAKYSSFLDSLREEFGRGTPKVCNIPVTKKANNDKFVLVNLVLPFNRNTITLAFRASDAYLVGFQDRDSKTNKLRANFFSDEYRALSGKYKSIFTDAEVLAPALPCASTYTDLQNKAGVSREKLSLGVSSLQTAFTAVYGKVFTGKNVAKFALISIQMVAEAARFKYIEDQVINRGMYSSFEAGARITLLENNWSKISEQYHKSCKLGGGQFTEEEMKLGLLLYN.

A disulfide bridge links Cys-32 with Cys-115. Glu-170 is an active-site residue.

In terms of assembly, monomer.

It catalyses the reaction Endohydrolysis of the N-glycosidic bond at one specific adenosine on the 28S rRNA.. Its function is as follows. Ribosome-inactivating protein of type 1, inhibits protein synthesis in animal cells. Inhibits cell-free translation in rabbit reticulocyte lysate system with an IC(50) of 0.17 nM. This Silene chalcedonica (Maltese-cross) protein is Ribosome-inactivating protein lychnin.